Here is a 139-residue protein sequence, read N- to C-terminus: Gonadotropin subunit beta-2 (139 aa).

Positions 1 to 24 (MFPLVLSLFLGATSDIWPLAPAEA) are cleaved as a signal peptide. 6 cysteine pairs are disulfide-bonded: Cys-30–Cys-78, Cys-44–Cys-93, Cys-47–Cys-131, Cys-55–Cys-109, Cys-59–Cys-111, and Cys-114–Cys-121. Asn-34 is a glycosylation site (N-linked (GlcNAc...) asparagine).

This sequence belongs to the glycoprotein hormones subunit beta family. As to quaternary structure, heterodimer of an alpha and a beta chain.

The protein resides in the secreted. Involved in gametogenesis and steroidogenesis. The polypeptide is Gonadotropin subunit beta-2 (cgbb) (Morone saxatilis (Striped bass)).